Here is a 184-residue protein sequence, read N- to C-terminus: uncharacterized protein (184 aa).

This is an uncharacterized protein from Methanocaldococcus jannaschii (strain ATCC 43067 / DSM 2661 / JAL-1 / JCM 10045 / NBRC 100440) (Methanococcus jannaschii).